The following is a 228-amino-acid chain: 5'-methylthioadenosine/S-adenosylhomocysteine nucleosidase (228 aa).

Catalysis depends on glutamate 11, which acts as the Proton acceptor. Substrate contacts are provided by residues glycine 77, isoleucine 151, and 172-173 (ME). Aspartate 196 (proton donor) is an active-site residue.

Belongs to the PNP/UDP phosphorylase family. MtnN subfamily.

The enzyme catalyses S-adenosyl-L-homocysteine + H2O = S-(5-deoxy-D-ribos-5-yl)-L-homocysteine + adenine. The catalysed reaction is S-methyl-5'-thioadenosine + H2O = 5-(methylsulfanyl)-D-ribose + adenine. It carries out the reaction 5'-deoxyadenosine + H2O = 5-deoxy-D-ribose + adenine. The protein operates within amino-acid biosynthesis; L-methionine biosynthesis via salvage pathway; S-methyl-5-thio-alpha-D-ribose 1-phosphate from S-methyl-5'-thioadenosine (hydrolase route): step 1/2. In terms of biological role, catalyzes the irreversible cleavage of the glycosidic bond in both 5'-methylthioadenosine (MTA) and S-adenosylhomocysteine (SAH/AdoHcy) to adenine and the corresponding thioribose, 5'-methylthioribose and S-ribosylhomocysteine, respectively. Also cleaves 5'-deoxyadenosine, a toxic by-product of radical S-adenosylmethionine (SAM) enzymes, into 5-deoxyribose and adenine. This chain is 5'-methylthioadenosine/S-adenosylhomocysteine nucleosidase, found in Staphylococcus epidermidis (strain ATCC 12228 / FDA PCI 1200).